The following is a 160-amino-acid chain: Globin-like protein (160 aa).

Residues 2 to 152 (SMTRQEIQDL…FNAECQVHLK (151 aa)) enclose the Globin domain. H101 contributes to the heme binding site.

Belongs to the globin family.

Its subcellular location is the cytoplasm. Functionally, may be a globin and may play a role in oxygen transport. This chain is Globin-like protein (glb-1), found in Caenorhabditis briggsae.